We begin with the raw amino-acid sequence, 660 residues long: MTHSHAQLVWQDGQPMSAVFGDVYFSRASGLEETRHVFLRHNQLEERFAALPPSGSFAIAETGFGTGLNFLCAWQCFEARAPAGARLHFVSAEKFPLTPSDLAQALALWPELEPWSSQLLAQYDVLTPGWHRFVLAGGRVTLTLMIGDVLEVLPQLDARVDAWFLDGFAPSKNPDMWQQALFEQMARLSGPGASFATFTSAGAVRRGLAGAGFEVRKAPGHGAKRHISHGWIATPPDAGWQAPWYARPEPRWRERSAIVVGGGLAGAASARSLALRGWQVTLIERMPQLASAASGNPQGVLYTKLSPHLTPLTRLVLSGYAYSLRALRCLLPEDGDWQACGVLQLAHDGKEAEKQQALAELNLPESVMRPLDRDAASELAGTDLPCGGLFFPQGGWVHPPALVRQLADHPNIVIKTGRTALTLDYDPAQRSWTAGDEQGPLAVASVVVLAGAAETAQFDSTRHLPLKKIRGQITSIPASEESSRLRTVLCGEGYISPARGGRHCLGATFKFDTDDLGVNDGEHAENLAMLAELAPSLRASLDRDAPEHLDGRAAFRCTSPDYLPLVGPAVAARDFVHAYRELARDATLRPATACPWAEGLYVNAAHGSRGLITAPLSGEILASLLEGEPAPLPADLMRAVHPSRFLLRDLIRRKLDPDAL.

The interval 1 to 233 (MTHSHAQLVW…KRHISHGWIA (233 aa)) is tRNA (mnm(5)s(2)U34)-methyltransferase. Residues 260–660 (VGGGLAGAAS…IRRKLDPDAL (401 aa)) form an FAD-dependent cmnm(5)s(2)U34 oxidoreductase region.

It in the N-terminal section; belongs to the methyltransferase superfamily. tRNA (mnm(5)s(2)U34)-methyltransferase family. This sequence in the C-terminal section; belongs to the DAO family. It depends on FAD as a cofactor.

The protein localises to the cytoplasm. It carries out the reaction 5-aminomethyl-2-thiouridine(34) in tRNA + S-adenosyl-L-methionine = 5-methylaminomethyl-2-thiouridine(34) in tRNA + S-adenosyl-L-homocysteine + H(+). In terms of biological role, catalyzes the last two steps in the biosynthesis of 5-methylaminomethyl-2-thiouridine (mnm(5)s(2)U) at the wobble position (U34) in tRNA. Catalyzes the FAD-dependent demodification of cmnm(5)s(2)U34 to nm(5)s(2)U34, followed by the transfer of a methyl group from S-adenosyl-L-methionine to nm(5)s(2)U34, to form mnm(5)s(2)U34. This chain is tRNA 5-methylaminomethyl-2-thiouridine biosynthesis bifunctional protein MnmC, found in Chromobacterium violaceum (strain ATCC 12472 / DSM 30191 / JCM 1249 / CCUG 213 / NBRC 12614 / NCIMB 9131 / NCTC 9757 / MK).